A 152-amino-acid polypeptide reads, in one-letter code: UPF0266 membrane protein KPN78578_23010 (152 aa).

Transmembrane regions (helical) follow at residues L6 to M26, V45 to H65, and T67 to I87.

This sequence belongs to the UPF0266 family.

Its subcellular location is the cell inner membrane. This is UPF0266 membrane protein KPN78578_23010 from Klebsiella pneumoniae subsp. pneumoniae (strain ATCC 700721 / MGH 78578).